The chain runs to 325 residues: Lipoyl synthase (325 aa).

The tract at residues 1-24 (MPIAPDRVRHPEKANRPDNPIQRK) is disordered. Residues C54, C59, C65, C80, C84, C87, and S293 each coordinate [4Fe-4S] cluster. The Radical SAM core domain maps to 66 to 282 (WKKKHATFMI…VTVGRGKGFL (217 aa)).

It belongs to the radical SAM superfamily. Lipoyl synthase family. Requires [4Fe-4S] cluster as cofactor.

It is found in the cytoplasm. The enzyme catalyses [[Fe-S] cluster scaffold protein carrying a second [4Fe-4S](2+) cluster] + N(6)-octanoyl-L-lysyl-[protein] + 2 oxidized [2Fe-2S]-[ferredoxin] + 2 S-adenosyl-L-methionine + 4 H(+) = [[Fe-S] cluster scaffold protein] + N(6)-[(R)-dihydrolipoyl]-L-lysyl-[protein] + 4 Fe(3+) + 2 hydrogen sulfide + 2 5'-deoxyadenosine + 2 L-methionine + 2 reduced [2Fe-2S]-[ferredoxin]. Its pathway is protein modification; protein lipoylation via endogenous pathway; protein N(6)-(lipoyl)lysine from octanoyl-[acyl-carrier-protein]: step 2/2. In terms of biological role, catalyzes the radical-mediated insertion of two sulfur atoms into the C-6 and C-8 positions of the octanoyl moiety bound to the lipoyl domains of lipoate-dependent enzymes, thereby converting the octanoylated domains into lipoylated derivatives. This chain is Lipoyl synthase, found in Rhodospirillum centenum (strain ATCC 51521 / SW).